A 284-amino-acid chain; its full sequence is MEMO1 family protein MmarC5_0191 (284 aa).

The protein belongs to the MEMO1 family.

In Methanococcus maripaludis (strain C5 / ATCC BAA-1333), this protein is MEMO1 family protein MmarC5_0191.